Consider the following 460-residue polypeptide: MNTSAPPAVSPNITVLAPGKGPWQVAFIGITTGLLSLATVTGNLLVLISFKVNTELKTVNNYFLLSLACADLIIGTFSMNLYTTYLLMGHWALGTLACDLWLALDYVASNASVMNLLLISFDRYFSVTRPLSYRAKRTPRRAALMIGLAWLVSFVLWAPAILFWQYLVGERTVLAGQCYIQFLSQPIITFGTAMAAFYLPVTVMCTLYWRIYRETENRARELAALQGSETPGKGGGSSSSSERSQPGAEGSPETPPGRCCRCCRPPRLLQAYSWKEDEEEDEGSMESLTSSEGEEPGSEVVIKMPMVDPEAQAPTKQPPRSSPNTVKRPTKKGRDRAGKGQKPRGKEQLAKRKTFSLVKEKKAARTLSAILLAFILTWTPYNIMVLVSTFCKDCVPETLWELGYWLCYVNSTINPMCYALCNKAFRDTFRLLLLCRWDKRRWRKIPKRPGSVHRTPSRQC.

Over 1–22 the chain is Extracellular; sequence MNTSAPPAVSPNITVLAPGKGP. N-linked (GlcNAc...) asparagine glycosylation is found at asparagine 2 and asparagine 12. Residues 23–48 traverse the membrane as a helical segment; sequence WQVAFIGITTGLLSLATVTGNLLVLI. At 49 to 62 the chain is on the cytoplasmic side; it reads SFKVNTELKTVNNY. A helical transmembrane segment spans residues 63–84; sequence FLLSLACADLIIGTFSMNLYTT. Over 85 to 95 the chain is Extracellular; sequence YLLMGHWALGT. The chain crosses the membrane as a helical span at residues 96–121; the sequence is LACDLWLALDYVASNASVMNLLLISF. Cysteine 98 and cysteine 178 are joined by a disulfide. Over 122–142 the chain is Cytoplasmic; sequence DRYFSVTRPLSYRAKRTPRRA. A helical transmembrane segment spans residues 143–164; the sequence is ALMIGLAWLVSFVLWAPAILFW. The Extracellular segment spans residues 165–185; sequence QYLVGERTVLAGQCYIQFLSQ. Residues 186-209 traverse the membrane as a helical segment; that stretch reads PIITFGTAMAAFYLPVTVMCTLYW. Topologically, residues 210 to 366 are cytoplasmic; that stretch reads RIYRETENRA…LVKEKKAART (157 aa). Disordered regions lie at residues 225–259, 273–297, and 310–351; these read LQGSETPGKGGGSSSSSERSQPGAEGSPETPPGRC, SWKEDEEEDEGSMESLTSSEGEEPG, and EAQA…QLAK. The residue at position 230 (threonine 230) is a Phosphothreonine. Residues 238 to 247 show a composition bias toward low complexity; sequence SSSSERSQPG. A compositionally biased stretch (basic residues) spans 328 to 343; sequence RPTKKGRDRAGKGQKP. The helical transmembrane segment at 367 to 390 threads the bilayer; that stretch reads LSAILLAFILTWTPYNIMVLVSTF. At 391 to 401 the chain is on the extracellular side; that stretch reads CKDCVPETLWE. Residues 402-420 form a helical membrane-spanning segment; that stretch reads LGYWLCYVNSTINPMCYAL. Over 421–460 the chain is Cytoplasmic; that stretch reads CNKAFRDTFRLLLLCRWDKRRWRKIPKRPGSVHRTPSRQC. At threonine 428 the chain carries Phosphothreonine. Serine 451 carries the post-translational modification Phosphoserine. A Phosphothreonine modification is found at threonine 455. At serine 457 the chain carries Phosphoserine.

This sequence belongs to the G-protein coupled receptor 1 family. Muscarinic acetylcholine receptor subfamily. CHRM1 sub-subfamily. In terms of assembly, interacts with GPRASP2. Interacts with TMEM147.

Its subcellular location is the cell membrane. The protein resides in the postsynaptic cell membrane. In terms of biological role, the muscarinic acetylcholine receptor mediates various cellular responses, including inhibition of adenylate cyclase, breakdown of phosphoinositides and modulation of potassium channels through the action of G proteins. Primary transducing effect is Pi turnover. This Macaca mulatta (Rhesus macaque) protein is Muscarinic acetylcholine receptor M1 (CHRM1).